A 336-amino-acid polypeptide reads, in one-letter code: Cytoskeleton protein RodZ (336 aa).

Over 1-111 the chain is Cytoplasmic; it reads MNTEATHDQN…LGKRRKKRDG (111 aa). The HTH cro/C1-type domain maps to 19–71; sequence LRNAREQLGLSQQAVAERLCLKVSTVRDIEEDKAPADLASTFLRGYIRSYARL. Positions 30-49 form a DNA-binding region, H-T-H motif; it reads QQAVAERLCLKVSTVRDIEE. The chain crosses the membrane as a helical; Signal-anchor for type II membrane protein span at residues 112–132; the sequence is WLMTFTWLVLFVVIGLSGAWW. Over 133-336 the chain is Periplasmic; the sequence is WQDHKAQQEE…TLNAEQSPAQ (204 aa). Residues 148 to 164 are compositionally biased toward polar residues; that stretch reads DQSSAELNNNQSQSVPL. The tract at residues 148–248 is disordered; it reads DQSSAELNNN…TDQAGVTTPA (101 aa). A compositionally biased stretch (low complexity) spans 165–201; it reads DTSTTTDQAMATTPTSPVDTTATNTQTPAATTAPSPT. Polar residues predominate over residues 202-217; sequence VDSQQNAVVPPSQANV. The span at 219-236 shows a compositional bias: low complexity; that stretch reads TAATPAPAATTMPDGAAP.

Belongs to the RodZ family.

It is found in the cell inner membrane. Functionally, cytoskeletal protein that is involved in cell-shape control through regulation of the length of the long axis. This is Cytoskeleton protein RodZ from Escherichia coli (strain SMS-3-5 / SECEC).